The sequence spans 534 residues: NAD(P)H-quinone oxidoreductase chain 4 (534 aa).

The next 14 helical transmembrane spans lie at 12–32 (FPWLSASILFPIGSAFVIPFF), 44–64 (FALSIALTTFLITVGSYINGF), 94–114 (ISMPLILLTSFITALAVLAAW), 120–140 (PKLFFFLILVMDGGQIAVFAV), 144–164 (LLFFLTWELELIPVYLLLAIW), 176–196 (FIIYTAGSSIFILLAALAMGF), 220–240 (ILCYVGLLIAFGVKLPIVPLH), 251–271 (TAPVHMLLAGILLKMGGYALL), 285–305 (FAPLLIVLGVVNIIYAALTSF), 314–334 (IAYSSISHMGFVLIGIGSFSS), 340–360 (AMLQMVSHGLIGASLFFLVGA), 384–404 (FALWTACSLASLALPGMSGFV), 425–445 (VIMASLAAIGVILTPIYLLSM), and 472–492 (VYIIACLLLPIIGIGLYPRLV).

This sequence belongs to the complex I subunit 4 family.

The protein resides in the cellular thylakoid membrane. It catalyses the reaction a plastoquinone + NADH + (n+1) H(+)(in) = a plastoquinol + NAD(+) + n H(+)(out). The enzyme catalyses a plastoquinone + NADPH + (n+1) H(+)(in) = a plastoquinol + NADP(+) + n H(+)(out). Functionally, NDH-1 shuttles electrons from NAD(P)H, via FMN and iron-sulfur (Fe-S) centers, to quinones in the respiratory chain. The immediate electron acceptor for the enzyme in this species is believed to be plastoquinone. Couples the redox reaction to proton translocation (for every two electrons transferred, four hydrogen ions are translocated across the cytoplasmic membrane), and thus conserves the redox energy in a proton gradient. The polypeptide is NAD(P)H-quinone oxidoreductase chain 4 (Prochlorococcus marinus (strain MIT 9312)).